A 916-amino-acid chain; its full sequence is Pertactin autotransporter (916 aa).

A signal peptide spans 1–37; sequence MNMSLSRIVKAAPLRRTTLAMALGALGALGAAPAAHA. Residues 263–265 carry the Cell attachment site; involved in adhesion to various eukaryotic cell lines motif; that stretch reads RGD. 3 consecutive repeat copies span residues 269 to 273, 274 to 278, and 279 to 283. Residues 269-288 are 4 X 5 AA tandem repeats of G-G-A-V-P; it reads GGAVPGGAVPGGAVPGGFGP. The stretch at 284–288 is one 4; approximate repeat; that stretch reads GGFGP. A disordered region spans residues 564–613; that stretch reads SLVGAKAPPAPKPAPQPGPQPGPQPPQPPQPPQRQPEAPAPQPPAGRELS. Positions 571-607 are enriched in pro residues; that stretch reads PPAPKPAPQPGPQPGPQPPQPPQPPQRQPEAPAPQPP. Positions 578–606 are 6 X 3 AA repeats of P-Q-P; sequence PQPGPQPGPQPPQPPQPPQRQPEAPAPQP. Positions 648-916 constitute an Autotransporter domain; it reads LNPDAGGAWG…TFHAGYRYSW (269 aa). A Cell attachment site motif is present at residues 706–708; it reads RGD.

In terms of assembly, monomer.

The protein resides in the periplasm. The protein localises to the secreted. Its subcellular location is the cell surface. It localises to the cell outer membrane. In terms of biological role, agglutinogen that binds to eukaryotic cells; a process mediated by the R-G-D sequence. Pertactin may have a role in bacterial adhesion, and thus play a role in virulence. May contribute to the disease state of whooping cough. This is Pertactin autotransporter (prn) from Bordetella bronchiseptica (strain ATCC BAA-588 / NCTC 13252 / RB50) (Alcaligenes bronchisepticus).